A 152-amino-acid chain; its full sequence is uncharacterized protein (152 aa).

4 consecutive transmembrane segments (helical) span residues Glu-2–Leu-22, Phe-26–Glu-46, Val-92–Leu-112, and Tyr-128–Lys-148.

Its subcellular location is the membrane. This is an uncharacterized protein from Acanthamoeba polyphaga mimivirus (APMV).